A 208-amino-acid polypeptide reads, in one-letter code: ATP-dependent Clp protease proteolytic subunit (208 aa).

Ser-105 acts as the Nucleophile in catalysis. The active site involves His-130.

The protein belongs to the peptidase S14 family. In terms of assembly, fourteen ClpP subunits assemble into 2 heptameric rings which stack back to back to give a disk-like structure with a central cavity, resembling the structure of eukaryotic proteasomes.

Its subcellular location is the cytoplasm. The enzyme catalyses Hydrolysis of proteins to small peptides in the presence of ATP and magnesium. alpha-casein is the usual test substrate. In the absence of ATP, only oligopeptides shorter than five residues are hydrolyzed (such as succinyl-Leu-Tyr-|-NHMec, and Leu-Tyr-Leu-|-Tyr-Trp, in which cleavage of the -Tyr-|-Leu- and -Tyr-|-Trp bonds also occurs).. Functionally, cleaves peptides in various proteins in a process that requires ATP hydrolysis. Has a chymotrypsin-like activity. Plays a major role in the degradation of misfolded proteins. This is ATP-dependent Clp protease proteolytic subunit from Xylella fastidiosa (strain 9a5c).